The chain runs to 477 residues: MQVLHVCSEMFPLLKTGGLADVIGALPAAQIADGVDARVLLPAFPDIRRGVTDAQVVSRRDTFAGHITLLFGHYNGVGIYLIDAPHLYDRPGSPYHDTNLFAYTDNVLRFALLGWVGAEMASGLDPFWRPDVVHAHDWHAGLAPAYLAARGRPAKSVFTVHNLAYQGMFYAHHMNDIQLPWSFFNIHGLEFNGQISFLKAGLYYADHITAVSPTYAREITEPQFAYGMEGLLQQRHREGRLSGVLNGVDEKIWSPETDLLLASRYTRDTLEDKAENKRQLQIAMGLKVDDKVPLFAVVSRLTSQKGLDLVLEALPGLLEQGGQLALLGAGDPVLQEGFLAAAAEYPGQVGVQIGYHEAFSHRIMGGADVILVPSRFEPCGLTQLYGLKYGTLPLVRRTGGLADTVSDCSLENLADGVASGFVFEDSNAWSLLRAIRRAFVLWSRASLWRFVQRQAMAMDFSWQVAAKSYRELYYRLK.

Residue K15 coordinates ADP-alpha-D-glucose.

The protein belongs to the glycosyltransferase 1 family. Bacterial/plant glycogen synthase subfamily.

The catalysed reaction is [(1-&gt;4)-alpha-D-glucosyl](n) + ADP-alpha-D-glucose = [(1-&gt;4)-alpha-D-glucosyl](n+1) + ADP + H(+). It functions in the pathway glycan biosynthesis; glycogen biosynthesis. Functionally, synthesizes alpha-1,4-glucan chains using ADP-glucose. This chain is Glycogen synthase, found in Shigella boydii serotype 4 (strain Sb227).